Here is a 1100-residue protein sequence, read N- to C-terminus: DNA-directed RNA polymerase subunit beta (1100 aa).

The disordered stretch occupies residues Tyr1064–Asp1100. The span at Arg1079 to Ser1089 shows a compositional bias: polar residues.

This sequence belongs to the RNA polymerase beta chain family. In terms of assembly, in cyanobacteria the RNAP catalytic core is composed of 2 alpha, 1 beta, 1 beta', 1 gamma and 1 omega subunit. When a sigma factor is associated with the core the holoenzyme is formed, which can initiate transcription.

It carries out the reaction RNA(n) + a ribonucleoside 5'-triphosphate = RNA(n+1) + diphosphate. In terms of biological role, DNA-dependent RNA polymerase catalyzes the transcription of DNA into RNA using the four ribonucleoside triphosphates as substrates. This is DNA-directed RNA polymerase subunit beta from Synechococcus sp. (strain ATCC 27144 / PCC 6301 / SAUG 1402/1) (Anacystis nidulans).